The chain runs to 113 residues: Transmembrane protein 256 (113 aa).

The N-terminal stretch at 1 to 29 (MAGVGAAFRRLGALSGAGALGLASYGAHG) is a signal peptide. At 30 to 63 (AQFPDAYGKELFDKANKHHFLHSLALLGVPSCRK) the chain is on the extracellular side. Residue K43 is modified to N6-acetyllysine. Residues 64 to 84 (PVWAGLLLASGTTLFCTSFYY) traverse the membrane as a helical segment. The Cytoplasmic portion of the chain corresponds to 85-92 (QALSGDTS). Residues 93–113 (IQTLGPVGGSLLILGWLALAF) traverse the membrane as a helical segment.

This sequence belongs to the TMEM256 family.

The protein resides in the membrane. This is Transmembrane protein 256 (Tmem256) from Mus musculus (Mouse).